The following is a 358-amino-acid chain: Alanine racemase (358 aa).

Lys34 serves as the catalytic Proton acceptor; specific for D-alanine. The residue at position 34 (Lys34) is an N6-(pyridoxal phosphate)lysine. Arg129 serves as a coordination point for substrate. Residue Tyr254 is the Proton acceptor; specific for L-alanine of the active site. Met302 serves as a coordination point for substrate.

This sequence belongs to the alanine racemase family. Pyridoxal 5'-phosphate is required as a cofactor.

The catalysed reaction is L-alanine = D-alanine. The protein operates within amino-acid biosynthesis; D-alanine biosynthesis; D-alanine from L-alanine: step 1/1. Its function is as follows. Catalyzes the interconversion of L-alanine and D-alanine. May also act on other amino acids. The polypeptide is Alanine racemase (alr) (Aliivibrio salmonicida (strain LFI1238) (Vibrio salmonicida (strain LFI1238))).